The sequence spans 294 residues: Phosphatidylserine decarboxylase proenzyme (294 aa).

Active-site charge relay system; for autoendoproteolytic cleavage activity residues include D100, H157, and S261. The active-site Schiff-base intermediate with substrate; via pyruvic acid; for decarboxylase activity is S261. At S261 the chain carries Pyruvic acid (Ser); by autocatalysis.

This sequence belongs to the phosphatidylserine decarboxylase family. PSD-B subfamily. Prokaryotic type I sub-subfamily. Heterodimer of a large membrane-associated beta subunit and a small pyruvoyl-containing alpha subunit. Pyruvate is required as a cofactor. In terms of processing, is synthesized initially as an inactive proenzyme. Formation of the active enzyme involves a self-maturation process in which the active site pyruvoyl group is generated from an internal serine residue via an autocatalytic post-translational modification. Two non-identical subunits are generated from the proenzyme in this reaction, and the pyruvate is formed at the N-terminus of the alpha chain, which is derived from the carboxyl end of the proenzyme. The autoendoproteolytic cleavage occurs by a canonical serine protease mechanism, in which the side chain hydroxyl group of the serine supplies its oxygen atom to form the C-terminus of the beta chain, while the remainder of the serine residue undergoes an oxidative deamination to produce ammonia and the pyruvoyl prosthetic group on the alpha chain. During this reaction, the Ser that is part of the protease active site of the proenzyme becomes the pyruvoyl prosthetic group, which constitutes an essential element of the active site of the mature decarboxylase.

The protein resides in the cell membrane. The catalysed reaction is a 1,2-diacyl-sn-glycero-3-phospho-L-serine + H(+) = a 1,2-diacyl-sn-glycero-3-phosphoethanolamine + CO2. The protein operates within phospholipid metabolism; phosphatidylethanolamine biosynthesis; phosphatidylethanolamine from CDP-diacylglycerol: step 2/2. Its function is as follows. Catalyzes the formation of phosphatidylethanolamine (PtdEtn) from phosphatidylserine (PtdSer). This Histophilus somni (strain 129Pt) (Haemophilus somnus) protein is Phosphatidylserine decarboxylase proenzyme.